A 250-amino-acid polypeptide reads, in one-letter code: UPF0259 membrane protein SG1383 (250 aa).

Helical transmembrane passes span 20-40 (FASILLLALLTALISVVLGHA), 86-106 (AGTLAGLVGNVLLAGGLLTMI), 121-141 (IGLSAPLLPRLLLLIFLTTLL), 146-166 (LLLIIVPGILLAIAFSLAPVI), 191-211 (LLAPAVLFWLLAKAAVLLLAT), and 219-239 (LVAVVLLNGLSNLISALLLIY).

It belongs to the UPF0259 family.

The protein resides in the cell inner membrane. In Sodalis glossinidius (strain morsitans), this protein is UPF0259 membrane protein SG1383.